A 382-amino-acid polypeptide reads, in one-letter code: Na(+)/H(+) antiporter NhaA 1 (382 aa).

A run of 11 helical transmembrane segments spans residues 10–30, 45–65, 87–107, 116–136, 145–165, 170–190, 211–231, 252–272, 275–295, 326–346, and 353–373; these read EFSI…NISP, FSFH…IAAA, LLAT…LNAL, GWGI…SLVF, FLLL…ALFY, LPAA…AALL, AGLF…VPFL, LASF…LFGL, AGVT…SLVI, LVGL…GEAF, and GAAK…LAAG.

This sequence belongs to the NhaA Na(+)/H(+) (TC 2.A.33) antiporter family.

It localises to the cell inner membrane. The catalysed reaction is Na(+)(in) + 2 H(+)(out) = Na(+)(out) + 2 H(+)(in). Na(+)/H(+) antiporter that extrudes sodium in exchange for external protons. This chain is Na(+)/H(+) antiporter NhaA 1, found in Pelobacter propionicus (strain DSM 2379 / NBRC 103807 / OttBd1).